Consider the following 312-residue polypeptide: Polyamine aminopropyltransferase (312 aa).

Residues 7–247 form the PABS domain; sequence FFWVQEYFTP…GPLGFALAAQ (241 aa). Q36 contacts S-methyl-5'-thioadenosine. Residues H67 and E95 each coordinate spermidine. S-methyl-5'-thioadenosine-binding positions include D115 and 147–148; that span reads DA. Catalysis depends on D165, which acts as the Proton acceptor. P174 serves as a coordination point for S-methyl-5'-thioadenosine.

Belongs to the spermidine/spermine synthase family. Homodimer or homotetramer.

The protein resides in the cytoplasm. It catalyses the reaction S-adenosyl 3-(methylsulfanyl)propylamine + putrescine = S-methyl-5'-thioadenosine + spermidine + H(+). It functions in the pathway amine and polyamine biosynthesis; spermidine biosynthesis; spermidine from putrescine: step 1/1. In terms of biological role, catalyzes the irreversible transfer of a propylamine group from the amino donor S-adenosylmethioninamine (decarboxy-AdoMet) to putrescine (1,4-diaminobutane) to yield spermidine. The polypeptide is Polyamine aminopropyltransferase (Synechococcus sp. (strain JA-2-3B'a(2-13)) (Cyanobacteria bacterium Yellowstone B-Prime)).